Reading from the N-terminus, the 155-residue chain is 3-dehydroquinate dehydratase 1 (155 aa).

Tyr-28 functions as the Proton acceptor in the catalytic mechanism. 3 residues coordinate substrate: Asn-80, His-86, and Asp-93. His-106 serves as the catalytic Proton donor. Residues 107–108 and Arg-117 each bind substrate; that span reads VT.

Belongs to the type-II 3-dehydroquinase family. Homododecamer.

The catalysed reaction is 3-dehydroquinate = 3-dehydroshikimate + H2O. Its pathway is metabolic intermediate biosynthesis; chorismate biosynthesis; chorismate from D-erythrose 4-phosphate and phosphoenolpyruvate: step 3/7. Catalyzes a trans-dehydration via an enolate intermediate. In Bradyrhizobium diazoefficiens (strain JCM 10833 / BCRC 13528 / IAM 13628 / NBRC 14792 / USDA 110), this protein is 3-dehydroquinate dehydratase 1 (aroQ1).